A 148-amino-acid chain; its full sequence is Large-conductance mechanosensitive channel (148 aa).

Transmembrane regions (helical) follow at residues 15–35 (LDMA…KSLV) and 84–104 (VGVF…VFLL).

This sequence belongs to the MscL family. Homopentamer.

It localises to the cell inner membrane. In terms of biological role, channel that opens in response to stretch forces in the membrane lipid bilayer. May participate in the regulation of osmotic pressure changes within the cell. This is Large-conductance mechanosensitive channel from Nitratidesulfovibrio vulgaris (strain DSM 19637 / Miyazaki F) (Desulfovibrio vulgaris).